The primary structure comprises 304 residues: Tyrosine recombinase XerC (304 aa).

In terms of domain architecture, Core-binding (CB) spans 2–88; the sequence is ENVKNFVKLF…ALRSFYKFLM (87 aa). A Tyr recombinase domain is found at 109–294; that stretch reads RIPKFLYQKE…SKEMLRNTYM (186 aa). Catalysis depends on residues R149, K173, H246, R249, and H272. Y281 serves as the catalytic O-(3'-phospho-DNA)-tyrosine intermediate.

The protein belongs to the 'phage' integrase family. XerC subfamily. Forms a cyclic heterotetrameric complex composed of two molecules of XerC and two molecules of XerD.

The protein resides in the cytoplasm. In terms of biological role, site-specific tyrosine recombinase, which acts by catalyzing the cutting and rejoining of the recombining DNA molecules. The XerC-XerD complex is essential to convert dimers of the bacterial chromosome into monomers to permit their segregation at cell division. It also contributes to the segregational stability of plasmids. The protein is Tyrosine recombinase XerC of Bacillus subtilis (strain 168).